The chain runs to 205 residues: High frequency lysogenization protein HflD homolog (205 aa).

It belongs to the HflD family.

The protein localises to the cytoplasm. It is found in the cell inner membrane. The sequence is that of High frequency lysogenization protein HflD homolog from Alkalilimnicola ehrlichii (strain ATCC BAA-1101 / DSM 17681 / MLHE-1).